A 118-amino-acid polypeptide reads, in one-letter code: Cell division protein FtsB (118 aa).

Topologically, residues Met1–Trp6 are cytoplasmic. A helical membrane pass occupies residues Leu7–Phe24. At Gly25 to Arg118 the chain is on the periplasmic side. The stretch at Gly30–Gly66 forms a coiled coil. The tract at residues Leu98–Arg118 is disordered. The segment covering Ser103 to Arg118 has biased composition (basic and acidic residues).

This sequence belongs to the FtsB family. Part of a complex composed of FtsB, FtsL and FtsQ.

The protein resides in the cell inner membrane. Essential cell division protein. May link together the upstream cell division proteins, which are predominantly cytoplasmic, with the downstream cell division proteins, which are predominantly periplasmic. This is Cell division protein FtsB from Xylella fastidiosa (strain M23).